The following is a 180-amino-acid chain: Cytokinin-beta-glucosidase (180 aa).

Accumulates in young leaves and shoot tips.

Functionally, hydrolyzes cytokinin glucosides thus liberating free cytokinins. The sequence is that of Cytokinin-beta-glucosidase (TROLC) from Nicotiana tabacum (Common tobacco).